The following is a 239-amino-acid chain: Phosducin-like protein 3 (239 aa).

Met-1 bears the N-acetylmethionine mark. The region spanning 32 to 180 (EAEEEQRILQ…EGDIKAQFIG (149 aa)) is the Phosducin domain. Ser-43 carries the phosphoserine modification. Residues 91–239 (FGEVLEISGK…MKRDSDSEGD (149 aa)) form a thioredoxin fold region. Interaction with XIAP stretches follow at residues 97-99 (ISG) and 153-155 (TCI). A phosphoserine mark is found at Ser-234 and Ser-236.

This sequence belongs to the phosducin family. In terms of assembly, interacts (via thioredoxin fold region) with KDR/VEGFR2 (via juxtamembrane domain). Forms ternary complexes with the chaperonin CCT complex and actin substrate, leading to inhibition of actin folding. Interacts with XIAP (via BIR 3 and RING domain). Interacts with HSP90AA1 and HSP90AB1. N-terminal methionine acetylation destabilizes the protein. In terms of tissue distribution, expressed in endothelial cells (at protein level). Expressed in all tissues examined including spleen, thymus, prostate, testis, ovary, small intestine and colon.

The protein localises to the cytoplasm. Its subcellular location is the perinuclear region. It is found in the endoplasmic reticulum. Functionally, acts as a chaperone for the angiogenic VEGF receptor KDR/VEGFR2, increasing its abundance by inhibiting its ubiquitination and degradation. Inhibits the folding activity of the chaperonin-containing T-complex (CCT) which leads to inhibition of cytoskeletal actin folding. Acts as a chaperone during heat shock alongside HSP90 and HSP40/70 chaperone complexes. Modulates the activation of caspases during apoptosis. In Homo sapiens (Human), this protein is Phosducin-like protein 3 (PDCL3).